The primary structure comprises 322 residues: 6-deoxy-6-sulfo-D-fructose transketolase subunit SqwH (322 aa).

The protein belongs to the transketolase family. In terms of assembly, forms a complex with SqwG. It depends on thiamine diphosphate as a cofactor.

The catalysed reaction is 6-deoxy-6-sulfo-D-fructose + D-glyceraldehyde 3-phosphate = 4-deoxy-4-sulfo-D-erythrose + D-xylulose 5-phosphate. It carries out the reaction 4-deoxy-4-sulfo-D-erythrulose + D-glyceraldehyde 3-phosphate = sulfoacetaldehyde + D-xylulose 5-phosphate. Part of the sulfo-TK pathway, a D-sulfoquinovose degradation pathway that produces 2-hydroxyethane-1-sulfonate (isethionate). Catalyzes two steps of the pathway: the formation of 4-deoxy-4-sulfoerythrose (SE) and xylulose 5-phosphate from 6-deoxy-6-sulfo-D-fructose (SF) and glyceraldehyde 3-phosphate, and the formation of sulfoacetaldehyde (SA) and xylulose 5-phosphate from 4-deoxy-4-sulfo-D-erythrulose (SEu) and glyceraldehyde 3-phosphate. This chain is 6-deoxy-6-sulfo-D-fructose transketolase subunit SqwH, found in Clostridium sp. (strain MSTE9).